A 323-amino-acid chain; its full sequence is MIRSVVRGVGSALPKRLLSNREMETLVDTSDDWIVQRTGIKQRYIAGEGETTASLGAEAALKALEAAGLAPADIDMIICATSTPDNTFPSAAVNIQNRLGMTHGFAFDVQAVCTGFVYAMTTADAYIRGGLAKRVLVIGAETFSRILDWQDRTTCVLFGDGAGALVLEAVEGQGTIADRGVLTAHLRSDGSHKDKLYVDGGPSTTGTVGHLRMEGREVFKHAVGMIADVIEQSFAASGLTAEDVDWLVPHQANRRIIDGAAKKLDIPLEKVVITVDQHGNTSAASIPLAISVAVADGRIKQGDLVLLEAMGGGFTWGALLLRW.

Residues Cys113 and His250 contribute to the active site. The tract at residues 251–255 (QANRR) is ACP-binding. The active site involves Asn280.

This sequence belongs to the thiolase-like superfamily. FabH family. As to quaternary structure, homodimer.

The protein localises to the cytoplasm. It carries out the reaction malonyl-[ACP] + acetyl-CoA + H(+) = 3-oxobutanoyl-[ACP] + CO2 + CoA. The protein operates within lipid metabolism; fatty acid biosynthesis. In terms of biological role, catalyzes the condensation reaction of fatty acid synthesis by the addition to an acyl acceptor of two carbons from malonyl-ACP. Catalyzes the first condensation reaction which initiates fatty acid synthesis and may therefore play a role in governing the total rate of fatty acid production. Possesses both acetoacetyl-ACP synthase and acetyl transacylase activities. Its substrate specificity determines the biosynthesis of branched-chain and/or straight-chain of fatty acids. The sequence is that of Beta-ketoacyl-[acyl-carrier-protein] synthase III from Allorhizobium ampelinum (strain ATCC BAA-846 / DSM 112012 / S4) (Agrobacterium vitis (strain S4)).